The chain runs to 642 residues: MQPRSERPAGRTQSPEHGSPGPGPEAPPPPPPQPPAPEAERTRPRQARPAAPMEGAVQLLSREGHSVAHNSKRHYHDAFVAMSRMRQRGLLCDIVLHVAAKEIRAHKVVLASCSPYFHAMFTNEMSESRQTHVTLHDIDPQALDQLVQFAYTAEIVVGEGNVQTLLPAASLLQLNGVRDACCKFLLSQLDPSNCLGIRGFADAHSCSDLLKAAHRYVLQHFVDVAKTEEFMLLPLKQVLELVSSDSLNVPSEEEVYRAVLSWVKHDVDARRQHVPRLMKCVRLPLLSRDFLLGHVDAESLVRHHPDCKDLLIEALKFHLLPEQRGVLGTSRTRPRRCEGAGPVLFAVGGGSLFAIHGDCEAYDTRTDRWHVVASMSTRRARVGVAAVGNRLYAVGGYDGTSDLATVESYDPVTNTWQPEVSMGTRRSCLGVAALHGLLYSAGGYDGASCLNSAERYDPLTGTWTSVAAMSTRRRYVRVATLDGNLYAVGGYDSSSHLATVEKYEPQVNVWSPVASMLSRRSSAGVAVLEGALYVAGGNDGTSCLNSVERYSPKAGAWESVAPMNIRRSTHDLVAMDGWLYAVGGNDGSSSLNSIEKYNPRTNKWVAASCMFTRRSSVGVAVLELLNFPPPSSPTLSVSSTSL.

The tract at residues 1 to 53 is disordered; the sequence is MQPRSERPAGRTQSPEHGSPGPGPEAPPPPPPQPPAPEAERTRPRQARPAAPM. Pro residues predominate over residues 21–37; sequence GPGPEAPPPPPPQPPAP. Residues 92–159 form the BTB domain; it reads CDIVLHVAAK…AYTAEIVVGE (68 aa). In terms of domain architecture, BACK spans 194–296; that stretch reads CLGIRGFADA…SRDFLLGHVD (103 aa). Residues 289–641 are interaction with F-actin; it reads DFLLGHVDAE…SPTLSVSSTS (353 aa). 6 Kelch repeats span residues 343–389, 390–436, 438–483, 484–530, 532–577, and 578–624; these read VLFA…AVGN, RLYA…ALHG, LYSA…TLDG, NLYA…VLEG, LYVA…AMDG, and WLYA…VLEL. Residues 640–642 are interaction with PDZK1; sequence TSL.

Interacts with F-actin; the interaction disrupts the F-actin structures and leads to marked changes of neuronal morphology. Component of a complex, composed of PDZK1, SYNGAP1, KLHL17 and NMDA receptors. Interacts directly with PDZK1 (via PDZ1 domain); the interaction is important for integrity of actin cytoskeleton structures in neurons. Interacts with DLG4 and SYNGAP1. Interacts (via kelch repeats) with GRIK2 (via C-terminus); the interaction targets GRIK2 for degradation via ubiquitin-proteasome pathway. Interacts with GRIK1. Interacts with (via BTB domain) CUL3; the interaction regulates surface GRIK2 expression.

Its subcellular location is the postsynaptic density. It is found in the synapse. It functions in the pathway protein modification; protein ubiquitination. Its function is as follows. Substrate-recognition component of some cullin-RING-based BCR (BTB-CUL3-RBX1) E3 ubiquitin-protein ligase complexes. The BCR(KLHL17) complex mediates the ubiquitination and subsequent degradation of GLUR6. May play a role in the actin-based neuronal function. The protein is Kelch-like protein 17 (KLHL17) of Homo sapiens (Human).